The following is a 353-amino-acid chain: Probable dual-specificity RNA methyltransferase RlmN (353 aa).

Glu-95 serves as the catalytic Proton acceptor. The region spanning 103 to 333 (DGGRKTICIS…PILNRRSPGR (231 aa)) is the Radical SAM core domain. Residues Cys-110 and Cys-339 are joined by a disulfide bond. 3 residues coordinate [4Fe-4S] cluster: Cys-117, Cys-121, and Cys-124. Residues 164–165 (GE), Ser-196, 219–221 (SLN), and Asn-296 contribute to the S-adenosyl-L-methionine site. The active-site S-methylcysteine intermediate is Cys-339.

The protein belongs to the radical SAM superfamily. RlmN family. [4Fe-4S] cluster serves as cofactor.

It is found in the cytoplasm. It catalyses the reaction adenosine(2503) in 23S rRNA + 2 reduced [2Fe-2S]-[ferredoxin] + 2 S-adenosyl-L-methionine = 2-methyladenosine(2503) in 23S rRNA + 5'-deoxyadenosine + L-methionine + 2 oxidized [2Fe-2S]-[ferredoxin] + S-adenosyl-L-homocysteine. The enzyme catalyses adenosine(37) in tRNA + 2 reduced [2Fe-2S]-[ferredoxin] + 2 S-adenosyl-L-methionine = 2-methyladenosine(37) in tRNA + 5'-deoxyadenosine + L-methionine + 2 oxidized [2Fe-2S]-[ferredoxin] + S-adenosyl-L-homocysteine. In terms of biological role, specifically methylates position 2 of adenine 2503 in 23S rRNA and position 2 of adenine 37 in tRNAs. This is Probable dual-specificity RNA methyltransferase RlmN from Leptospira biflexa serovar Patoc (strain Patoc 1 / Ames).